The chain runs to 485 residues: Glutamyl-tRNA(Gln) amidotransferase subunit A (485 aa).

Catalysis depends on charge relay system residues Lys78 and Ser153. The active-site Acyl-ester intermediate is Ser177.

This sequence belongs to the amidase family. GatA subfamily. In terms of assembly, heterotrimer of A, B and C subunits.

The enzyme catalyses L-glutamyl-tRNA(Gln) + L-glutamine + ATP + H2O = L-glutaminyl-tRNA(Gln) + L-glutamate + ADP + phosphate + H(+). Allows the formation of correctly charged Gln-tRNA(Gln) through the transamidation of misacylated Glu-tRNA(Gln) in organisms which lack glutaminyl-tRNA synthetase. The reaction takes place in the presence of glutamine and ATP through an activated gamma-phospho-Glu-tRNA(Gln). In Geotalea daltonii (strain DSM 22248 / JCM 15807 / FRC-32) (Geobacter daltonii), this protein is Glutamyl-tRNA(Gln) amidotransferase subunit A.